A 152-amino-acid chain; its full sequence is Transcriptional regulator MraZ (152 aa).

SpoVT-AbrB domains are found at residues 5-52 and 81-124; these read ASSL…PLAQ and ATEY…DEAR.

The protein belongs to the MraZ family. As to quaternary structure, forms oligomers.

The protein localises to the cytoplasm. Its subcellular location is the nucleoid. This Pseudoalteromonas translucida (strain TAC 125) protein is Transcriptional regulator MraZ.